The primary structure comprises 246 residues: MSRLEIYSPEGLRLDGRRWNELRRFESSINTHPHAADGSSYMEQGNNKIITLVKGPKEPRLKSQMDTSKALLNVSVNITKFSKFERSKSSHKNERRVLEIQTSLVRMFEKNVMLNIYPRTVIDIEIHVLEQDGGIMGSLINGITLALIDAGISMFDYISGISVGLYDTTPLLDTNSLEENAMSTVTLGVVGKSEKLSLLLVEDKIPLDRLENVLAIGIAGAHRVRDLMDEELRKHAQKRVSNASAR.

Belongs to the RNase PH family. As to quaternary structure, component of the RNA exosome complex. Specifically part of the catalytically inactive RNA exosome core complex (Exo-9) which may associate with the catalytic subunits RRP6 and DIS3 in cytoplasmic- and nuclear-specific RNA exosome complex forms. Exo-9 is formed by a hexameric base ring of RNase PH domain-containing subunits and a cap ring consisting of CSL4, RRP4 and RRP40.

It localises to the cytoplasm. The protein resides in the nucleus. The protein localises to the nucleolus. In terms of biological role, non-catalytic component of the RNA exosome complex which has 3'-&gt;5' exoribonuclease activity and participates in a multitude of cellular RNA processing and degradation events. In the nucleus, the RNA exosome complex is involved in proper maturation of stable RNA species such as rRNA, snRNA and snoRNA, in the elimination of RNA processing by-products and non-coding 'pervasive' transcripts, such as antisense RNA species and cryptic unstable transcripts (CUTs), and of mRNAs with processing defects, thereby limiting or excluding their export to the cytoplasm. In the cytoplasm, the RNA exosome complex is involved in general mRNA turnover and in RNA surveillance pathways, preventing translation of aberrant mRNAs. The catalytic inactive RNA exosome core complex of 9 subunits (Exo-9) is proposed to play a pivotal role in the binding and presentation of RNA for ribonucleolysis, and to serve as a scaffold for the association with catalytic subunits and accessory proteins or complexes. SKI6 is part of the hexameric ring of RNase PH domain-containing subunits proposed to form a central channel which threads RNA substrates for degradation. This chain is Exosome complex component SKI6 (SKI6), found in Saccharomyces cerevisiae (strain ATCC 204508 / S288c) (Baker's yeast).